The primary structure comprises 111 residues: DNA-binding protein AF_2068 (111 aa).

Belongs to the PDCD5 family.

The chain is DNA-binding protein AF_2068 from Archaeoglobus fulgidus (strain ATCC 49558 / DSM 4304 / JCM 9628 / NBRC 100126 / VC-16).